The sequence spans 245 residues: Adenosylcobinamide-GDP ribazoletransferase (245 aa).

5 helical membrane passes run 35–55 (WFPL…ALGL), 108–128 (IGAF…IGAH), 137–157 (GVLI…AALV), 176–196 (IAIG…TPAI), and 197–217 (TTVT…HLAR).

The protein belongs to the CobS family. It depends on Mg(2+) as a cofactor.

The protein resides in the cell inner membrane. It catalyses the reaction alpha-ribazole + adenosylcob(III)inamide-GDP = adenosylcob(III)alamin + GMP + H(+). The enzyme catalyses alpha-ribazole 5'-phosphate + adenosylcob(III)inamide-GDP = adenosylcob(III)alamin 5'-phosphate + GMP + H(+). Its pathway is cofactor biosynthesis; adenosylcobalamin biosynthesis; adenosylcobalamin from cob(II)yrinate a,c-diamide: step 7/7. Joins adenosylcobinamide-GDP and alpha-ribazole to generate adenosylcobalamin (Ado-cobalamin). Also synthesizes adenosylcobalamin 5'-phosphate from adenosylcobinamide-GDP and alpha-ribazole 5'-phosphate. This Nitratidesulfovibrio vulgaris (strain ATCC 29579 / DSM 644 / CCUG 34227 / NCIMB 8303 / VKM B-1760 / Hildenborough) (Desulfovibrio vulgaris) protein is Adenosylcobinamide-GDP ribazoletransferase.